Here is a 748-residue protein sequence, read N- to C-terminus: Long-chain-alcohol oxidase FAO4B (748 aa).

The segment covering 1 to 18 (MEDVRRRNRGHPLLRSKK) has biased composition (basic residues). The segment at 1–25 (MEDVRRRNRGHPLLRSKKRGEGYNH) is disordered. The next 2 membrane-spanning stretches (helical) occupy residues 89 to 109 (IILM…SLCL) and 140 to 160 (FLLP…FYFF). 238 to 253 (CDAVVVGSGSGGGVAA) contacts FAD. Histidine 679 acts as the Proton acceptor in catalysis.

The protein belongs to the GMC oxidoreductase family.

The protein resides in the membrane. It catalyses the reaction a long-chain primary fatty alcohol + O2 = a long-chain fatty aldehyde + H2O2. Its function is as follows. Long-chain fatty alcohol oxidase involved in the omega-oxidation pathway of lipid degradation. The polypeptide is Long-chain-alcohol oxidase FAO4B (FAO4B) (Arabidopsis thaliana (Mouse-ear cress)).